The sequence spans 505 residues: Maturase K (505 aa).

Belongs to the intron maturase 2 family. MatK subfamily.

It localises to the plastid. Its subcellular location is the chloroplast. Functionally, usually encoded in the trnK tRNA gene intron. Probably assists in splicing its own and other chloroplast group II introns. The protein is Maturase K of Cubanola domingensis.